A 305-amino-acid polypeptide reads, in one-letter code: Glutaminase (305 aa).

Residues S61, N113, E158, N165, Y189, Y241, and V259 each contribute to the substrate site.

The protein belongs to the glutaminase family. Homotetramer.

It catalyses the reaction L-glutamine + H2O = L-glutamate + NH4(+). This chain is Glutaminase, found in Clostridium botulinum (strain Loch Maree / Type A3).